A 279-amino-acid polypeptide reads, in one-letter code: BEN domain-containing protein 6 (279 aa).

Residues 1–15 (MQKIVQTDEITNTQA) are compositionally biased toward polar residues. 2 disordered regions span residues 1 to 65 (MQKI…LAEL) and 134 to 172 (RATN…TDEK). Residues 62-99 (LAELSKEELCAKIKSLKEKLTNTRKENSRLRQSLVMLQ) adopt a coiled-coil conformation. The span at 134 to 148 (RATNNSSPDSFASTC) shows a compositional bias: polar residues. A compositionally biased stretch (basic and acidic residues) spans 162 to 172 (KPEEEHQTDEK). A BEN domain is found at 171 to 271 (EKQFQIEKWQ…NCTKKPNLSK (101 aa)).

In terms of assembly, interacts (via BEN domain) with RBPJ.

It localises to the nucleus. Functionally, acts as a corepressor of recombining binding protein suppressor hairless (RBPJ) and inhibits Notch signaling in neural stem cells, thereby opposing their self-renewal and promoting neurogenesis. This Homo sapiens (Human) protein is BEN domain-containing protein 6 (BEND6).